Reading from the N-terminus, the 84-residue chain is Anaphase-promoting complex subunit 11 (84 aa).

The segment at Cys34 to Arg77 adopts an RING-type; atypical zinc-finger fold.

Belongs to the RING-box family. In terms of assembly, part of the APC/C complex composed of at least 10 subunits. Interacts with APC2.

Its subcellular location is the cytoplasm. The protein localises to the nucleus. Its pathway is protein modification; protein ubiquitination. Its function is as follows. Component of the anaphase promoting complex/cyclosome (APC/C), a cell cycle-regulated E3 ubiquitin-protein ligase complex that controls progression through mitosis and the G1 phase of the cell cycle. The APC/C complex controls several key steps in the cell cycle by mediating ubiquitination and subsequent degradation of target proteins such as cyclins. The APC/C complex is required for the female gametophyte development and is involved in several aspect of development by controlling cell division and cell elongation. Involved in the control of endoreduplication. May recruit the E2 ubiquitin-conjugating enzymes to the complex. The polypeptide is Anaphase-promoting complex subunit 11 (Arabidopsis thaliana (Mouse-ear cress)).